Reading from the N-terminus, the 469-residue chain is Ribulose bisphosphate carboxylase large chain (469 aa).

Residues 1-2 (MS) constitute a propeptide that is removed on maturation. N-acetylproline is present on proline 3. Residue lysine 14 is modified to N6,N6,N6-trimethyllysine. The substrate site is built by asparagine 123 and threonine 173. The Proton acceptor role is filled by lysine 175. Lysine 177 contributes to the substrate binding site. 3 residues coordinate Mg(2+): lysine 201, aspartate 203, and glutamate 204. At lysine 201 the chain carries N6-carboxylysine. Histidine 294 (proton acceptor) is an active-site residue. Substrate is bound by residues arginine 295, histidine 327, and serine 379.

It belongs to the RuBisCO large chain family. Type I subfamily. As to quaternary structure, heterohexadecamer of 8 large chains and 8 small chains; disulfide-linked. The disulfide link is formed within the large subunit homodimers. Mg(2+) serves as cofactor. The disulfide bond which can form in the large chain dimeric partners within the hexadecamer appears to be associated with oxidative stress and protein turnover.

The protein resides in the plastid. It localises to the chloroplast. It catalyses the reaction 2 (2R)-3-phosphoglycerate + 2 H(+) = D-ribulose 1,5-bisphosphate + CO2 + H2O. The enzyme catalyses D-ribulose 1,5-bisphosphate + O2 = 2-phosphoglycolate + (2R)-3-phosphoglycerate + 2 H(+). RuBisCO catalyzes two reactions: the carboxylation of D-ribulose 1,5-bisphosphate, the primary event in carbon dioxide fixation, as well as the oxidative fragmentation of the pentose substrate in the photorespiration process. Both reactions occur simultaneously and in competition at the same active site. The sequence is that of Ribulose bisphosphate carboxylase large chain from Iris ensata (Japanese iris).